The chain runs to 342 residues: L-threonine 3-dehydrogenase (342 aa).

Residue C38 coordinates Zn(2+). Catalysis depends on charge relay system residues T40 and H43. Zn(2+)-binding residues include H63, E64, C93, C96, C99, and C107. NAD(+) contacts are provided by residues V175, D195, R200, 262–264, and 286–287; these read LGI and IY.

This sequence belongs to the zinc-containing alcohol dehydrogenase family. Homotetramer. Zn(2+) is required as a cofactor.

It localises to the cytoplasm. It catalyses the reaction L-threonine + NAD(+) = (2S)-2-amino-3-oxobutanoate + NADH + H(+). Its pathway is amino-acid degradation; L-threonine degradation via oxydo-reductase pathway; glycine from L-threonine: step 1/2. Catalyzes the NAD(+)-dependent oxidation of L-threonine to 2-amino-3-ketobutyrate. The chain is L-threonine 3-dehydrogenase from Coxiella burnetii (strain Dugway 5J108-111).